The sequence spans 242 residues: Protein FsrB (242 aa).

A run of 5 helical transmembrane segments spans residues 29 to 49, 52 to 72, 78 to 95, 100 to 120, and 160 to 180; these read LTVYFSGLFNFLMILILSVLF, LSETFIVYVVLIFLRPVAGGW, WLCRLESIVIYVAIPFVL, VSLPFIYKILLICLLVVLFYW, and KIASVILYGLVIQGLMILPVT.

The protein belongs to the AgrB family.

It localises to the cell membrane. Its function is as follows. May be involved in the proteolytic processing of a quorum sensing system signal molecule precursor required for the regulation of the virulence genes for gelatinase (gelE) and a serine protease (sprE). This Enterococcus faecalis (strain ATCC 47077 / OG1RF) protein is Protein FsrB (fsrB).